We begin with the raw amino-acid sequence, 202 residues long: MITIGITGGIGSGKSVVSRILLTLGIPVYDSDSRAKWLNDHSPVVRQALTGLIGSDLYENGILRRDRLAAAIFSSGDLLEQVNGIIHPEVKKDFCQWRSECESDLCAIESAILFSSGFNSLCDTVIRVDAPEKIRQERAMARDGSSAETMRQRMLSQEREQSLAKAGADHTVLNAPPHLLVPQVVRIIETVRTKRPNPPDRL.

Positions 3–202 (TIGITGGIGS…TKRPNPPDRL (200 aa)) constitute a DPCK domain. ATP is bound at residue 11-16 (GSGKSV). Residues 138 to 161 (RAMARDGSSAETMRQRMLSQEREQ) are disordered.

The protein belongs to the CoaE family.

Its subcellular location is the cytoplasm. It carries out the reaction 3'-dephospho-CoA + ATP = ADP + CoA + H(+). It functions in the pathway cofactor biosynthesis; coenzyme A biosynthesis; CoA from (R)-pantothenate: step 5/5. Its function is as follows. Catalyzes the phosphorylation of the 3'-hydroxyl group of dephosphocoenzyme A to form coenzyme A. This Porphyromonas gingivalis (strain ATCC BAA-308 / W83) protein is Dephospho-CoA kinase.